The chain runs to 222 residues: MGTVRSQIRPGLYAITDNRLTPADTLIVSVEAALAGGARLVQYRDKGSTASERLVQARNLNSLCQGFDVPLLINDDPELAARVGAAGVHLGQDDCSLVDARRLLGEHAIIGITCHHSLNLAQTAVDGGADYLAFGRFYDSATKPGAPPASPDVLTEAKALGLPITAIGGITGNNAEPLIRAGADLVAVVGGLFGGQPSDIEARAKAFNRQFARHHPLFSLSE.

Residues 42-46 (QYRDK) and asparagine 74 each bind 4-amino-2-methyl-5-(diphosphooxymethyl)pyrimidine. 2 residues coordinate Mg(2+): aspartate 75 and aspartate 94. Threonine 113 provides a ligand contact to 4-amino-2-methyl-5-(diphosphooxymethyl)pyrimidine. 140 to 142 (SAT) lines the 2-[(2R,5Z)-2-carboxy-4-methylthiazol-5(2H)-ylidene]ethyl phosphate pocket. Lysine 143 serves as a coordination point for 4-amino-2-methyl-5-(diphosphooxymethyl)pyrimidine. 2-[(2R,5Z)-2-carboxy-4-methylthiazol-5(2H)-ylidene]ethyl phosphate is bound at residue glycine 169.

This sequence belongs to the thiamine-phosphate synthase family. Requires Mg(2+) as cofactor.

It catalyses the reaction 2-[(2R,5Z)-2-carboxy-4-methylthiazol-5(2H)-ylidene]ethyl phosphate + 4-amino-2-methyl-5-(diphosphooxymethyl)pyrimidine + 2 H(+) = thiamine phosphate + CO2 + diphosphate. It carries out the reaction 2-(2-carboxy-4-methylthiazol-5-yl)ethyl phosphate + 4-amino-2-methyl-5-(diphosphooxymethyl)pyrimidine + 2 H(+) = thiamine phosphate + CO2 + diphosphate. The catalysed reaction is 4-methyl-5-(2-phosphooxyethyl)-thiazole + 4-amino-2-methyl-5-(diphosphooxymethyl)pyrimidine + H(+) = thiamine phosphate + diphosphate. It functions in the pathway cofactor biosynthesis; thiamine diphosphate biosynthesis; thiamine phosphate from 4-amino-2-methyl-5-diphosphomethylpyrimidine and 4-methyl-5-(2-phosphoethyl)-thiazole: step 1/1. Its function is as follows. Condenses 4-methyl-5-(beta-hydroxyethyl)thiazole monophosphate (THZ-P) and 2-methyl-4-amino-5-hydroxymethyl pyrimidine pyrophosphate (HMP-PP) to form thiamine monophosphate (TMP). This Marinobacter nauticus (strain ATCC 700491 / DSM 11845 / VT8) (Marinobacter aquaeolei) protein is Thiamine-phosphate synthase.